The chain runs to 183 residues: NAD(P)H-quinone oxidoreductase subunit J (183 aa).

Residues 1–21 (MAEENAQEKQAPPSAGEQSEP) form a disordered region.

It belongs to the complex I 30 kDa subunit family. As to quaternary structure, NDH-1 can be composed of about 15 different subunits; different subcomplexes with different compositions have been identified which probably have different functions.

It is found in the cellular thylakoid membrane. It catalyses the reaction a plastoquinone + NADH + (n+1) H(+)(in) = a plastoquinol + NAD(+) + n H(+)(out). It carries out the reaction a plastoquinone + NADPH + (n+1) H(+)(in) = a plastoquinol + NADP(+) + n H(+)(out). Functionally, NDH-1 shuttles electrons from an unknown electron donor, via FMN and iron-sulfur (Fe-S) centers, to quinones in the respiratory and/or the photosynthetic chain. The immediate electron acceptor for the enzyme in this species is believed to be plastoquinone. Couples the redox reaction to proton translocation, and thus conserves the redox energy in a proton gradient. Cyanobacterial NDH-1 also plays a role in inorganic carbon-concentration. In Synechococcus sp. (strain JA-2-3B'a(2-13)) (Cyanobacteria bacterium Yellowstone B-Prime), this protein is NAD(P)H-quinone oxidoreductase subunit J.